A 503-amino-acid chain; its full sequence is MHYVDPNQSGSKIHFKDQYENFIGGQWVAPVKGVYFDNISPVDGKSFTRIPRSSAEDIELALDAAHKAKKEWNKSSPTTRSNLLLKIADRMEANLEMLAVAETWDNGKPVRETLAADIPLAIDHFRYFAGCIRAQEGGISEIDEDTIAYHFHEPLGVVGQIIPWNFPILMAAWKLAPALAAGNCVVIKPAEQTPVGILLVAELIQDLLPAGVLNIVNGYGAEVGRPLATSPRIAKIAFTGSTQVGQLIMQYATENIIPVTLELGGKSPNVFFADVMDHDDDFLDKTLEGFAMFALNQGEVCTCPSRALIQESIADQFMEKAIERVKRIKLGHPLDTDTMVGAQASLEQQEKILRCIDTGRQEGAEVLLGGHGRQEVGNGYYIEPTIFKGHNNMQVFQEEIFGPVLSVTTFKDFDEAIQIANDTMYGLGAGVWSRSTHTAYRAGRAIEAGRVWTNCYHIYPAHAAFGGYKKSGVGRENHKMMLDHYQQTKNLLVSYSTKAMGFF.

218–224 (GYGAEVG) contacts NAD(+). Active-site residues include Glu-262 and Cys-301.

This sequence belongs to the aldehyde dehydrogenase family. Homotetramer.

The catalysed reaction is a long-chain fatty aldehyde + NAD(+) + H2O = a long-chain fatty acid + NADH + 2 H(+). With respect to regulation, completely inhibited by p-chloromercuribenzoate and N-ethylmaleimide. Strongly inhibited by iodoacetate. Inhibited by Pb(2+), Fe(3+), Ag(+) and Hg(2+) and partially inhibited by several other metal ions Mn(2+), Zn(2+) and Cu(2+). In terms of biological role, aldehyde dehydrogenase that shows activity toward n-alkanals (C(4) to C(14)), with a preference for longer carbon chains. The best substrate is tetradecanal. The sequence is that of Long-chain-aldehyde dehydrogenase (ald1) from Acinetobacter sp.